Consider the following 576-residue polypeptide: Lipoprotein LpqB (576 aa).

Positions 1–16 are cleaved as a signal peptide; sequence MRRVTRTIAAAGAAIA. Cysteine 17 carries the N-palmitoyl cysteine lipid modification. Cysteine 17 carries the S-diacylglycerol cysteine lipid modification.

It belongs to the LpqB lipoprotein family.

It is found in the cell membrane. This chain is Lipoprotein LpqB, found in Bifidobacterium longum (strain NCC 2705).